The chain runs to 307 residues: MTYIVQTNGLTKTYQGKEVVSNVSMHIKKGEIYGFLGPNGAGKTTIMKMLTSLVKPTSGEIIILGNKFTHTSYEVLGNIGSMIEYPIFYENLTAEENLDLHCEYMGYHNKKAIQEVLDMVNLKQIDKKPVKTFSLGMKQRLGIARAILTKPDLLILDEPVNGLDPLGIKKIRQLFQVLSKEYGMTLLISSHLLGEIEQIADTIGVIRDGRLLEEVSMEDVRGQNTEYIELVTPNQTRACFVLEKELQLTNFKILNEKTIRIYEAEASQAAISKALILNDVDIESMNKKYTSLEDYFIKLINGNSISA.

An ABC transporter domain is found at 5–233 (VQTNGLTKTY…NTEYIELVTP (229 aa)). Residue 37–44 (GPNGAGKT) participates in ATP binding.

Belongs to the ABC transporter superfamily.

This is an uncharacterized protein from Bacillus subtilis (strain 168).